The sequence spans 882 residues: Valine--tRNA ligase (882 aa).

Positions Pro-45–His-55 match the 'HIGH' region motif. Positions Lys-519–Ser-523 match the 'KMSKS' region motif. Residue Lys-522 coordinates ATP. The stretch at Leu-808–Ser-882 forms a coiled coil.

This sequence belongs to the class-I aminoacyl-tRNA synthetase family. ValS type 1 subfamily. In terms of assembly, monomer.

The protein resides in the cytoplasm. It carries out the reaction tRNA(Val) + L-valine + ATP = L-valyl-tRNA(Val) + AMP + diphosphate. Catalyzes the attachment of valine to tRNA(Val). As ValRS can inadvertently accommodate and process structurally similar amino acids such as threonine, to avoid such errors, it has a 'posttransfer' editing activity that hydrolyzes mischarged Thr-tRNA(Val) in a tRNA-dependent manner. The sequence is that of Valine--tRNA ligase from Streptococcus pyogenes serotype M28 (strain MGAS6180).